The following is a 443-amino-acid chain: UDP-N-acetylglucosamine 1-carboxyvinyltransferase 1 (443 aa).

22 to 23 lines the phosphoenolpyruvate pocket; that stretch reads KN. Arg-95 serves as a coordination point for UDP-N-acetyl-alpha-D-glucosamine. Cys-119 serves as the catalytic Proton donor. 2-(S-cysteinyl)pyruvic acid O-phosphothioketal is present on Cys-119. UDP-N-acetyl-alpha-D-glucosamine is bound by residues 124-128, Asp-308, and Val-330; that span reads RPIDL.

It belongs to the EPSP synthase family. MurA subfamily.

The protein resides in the cytoplasm. The enzyme catalyses phosphoenolpyruvate + UDP-N-acetyl-alpha-D-glucosamine = UDP-N-acetyl-3-O-(1-carboxyvinyl)-alpha-D-glucosamine + phosphate. Its pathway is cell wall biogenesis; peptidoglycan biosynthesis. Cell wall formation. Adds enolpyruvyl to UDP-N-acetylglucosamine. This is UDP-N-acetylglucosamine 1-carboxyvinyltransferase 1 from Oceanobacillus iheyensis (strain DSM 14371 / CIP 107618 / JCM 11309 / KCTC 3954 / HTE831).